Reading from the N-terminus, the 274-residue chain is tRNA (mnm(5)s(2)U34)-methyltransferase, chloroplastic (274 aa).

The transit peptide at 1–50 (MAAGFFQAEMSILSSTLARSYSLPIRKTLMTFDFRIAMQRNPCLRIRRSC) directs the protein to the chloroplast. The S-adenosyl-L-methionine site is built by Asn108, Asn110, Asp134, Gln136, and His166.

Belongs to the methyltransferase superfamily. MnmM family.

Its subcellular location is the plastid. The protein localises to the chloroplast. It carries out the reaction 5-aminomethyl-2-thiouridine(34) in tRNA + S-adenosyl-L-methionine = 5-methylaminomethyl-2-thiouridine(34) in tRNA + S-adenosyl-L-homocysteine + H(+). It participates in tRNA modification. Involved in the biosynthesis of 5-methylaminomethyl-2-thiouridine (mnm(5)s(2)U) at the wobble position (U34) in tRNA. Catalyzes the transfer of a methyl group from S-adenosyl-L-methionine to nm(5)s(2)U34 to form mnm(5)s(2)U34. In Arabidopsis thaliana (Mouse-ear cress), this protein is tRNA (mnm(5)s(2)U34)-methyltransferase, chloroplastic.